Reading from the N-terminus, the 135-residue chain is Galectin-1 (135 aa).

Ala2 is modified (N-acetylalanine). A Galectin domain is found at 4–135 (GLVASNLNLK…DFKIKCVAFD (132 aa)). N6-acetyllysine is present on residues Lys13 and Lys29. Ser30 is subject to Phosphoserine. A beta-D-galactoside contacts are provided by residues 45 to 49 (HFNPR), His53, Asn62, and 69 to 72 (WGTE). Position 108 is an N6-acetyllysine; alternate (Lys108). The residue at position 108 (Lys108) is an N6-succinyllysine; alternate. Lys128 is modified (N6-acetyllysine).

As to quaternary structure, homodimer. Binds LGALS3BP. Interacts with CD2, CD3, CD4, CD6, CD7, CD43, ALCAM and CD45. Interacts with laminin (via poly-N-acetyllactosamine). Interacts with SUSD2.

Its subcellular location is the secreted. The protein resides in the extracellular space. It localises to the extracellular matrix. Its function is as follows. Lectin that binds beta-galactoside and a wide array of complex carbohydrates. Plays a role in regulating apoptosis, cell proliferation and cell differentiation. Inhibits CD45 protein phosphatase activity and therefore the dephosphorylation of Lyn kinase. Strong inducer of T-cell apoptosis. The polypeptide is Galectin-1 (LGALS1) (Pongo abelii (Sumatran orangutan)).